Consider the following 259-residue polypeptide: Deoxyribose-phosphate aldolase (259 aa).

The active-site Proton donor/acceptor is the aspartate 102. The Schiff-base intermediate with acetaldehyde role is filled by lysine 167. Lysine 201 functions as the Proton donor/acceptor in the catalytic mechanism.

The protein belongs to the DeoC/FbaB aldolase family. DeoC type 2 subfamily.

It localises to the cytoplasm. It catalyses the reaction 2-deoxy-D-ribose 5-phosphate = D-glyceraldehyde 3-phosphate + acetaldehyde. It functions in the pathway carbohydrate degradation; 2-deoxy-D-ribose 1-phosphate degradation; D-glyceraldehyde 3-phosphate and acetaldehyde from 2-deoxy-alpha-D-ribose 1-phosphate: step 2/2. In terms of biological role, catalyzes a reversible aldol reaction between acetaldehyde and D-glyceraldehyde 3-phosphate to generate 2-deoxy-D-ribose 5-phosphate. The sequence is that of Deoxyribose-phosphate aldolase from Enterobacter sp. (strain 638).